The following is a 464-amino-acid chain: Protein FAM90A12 (464 aa).

3 disordered regions span residues 1 to 42, 70 to 389, and 411 to 437; these read MMAR…DPRL, PATL…HDGA, and APSF…SEAP. 2 stretches are compositionally biased toward basic and acidic residues: residues 74-89 and 97-114; these read GKKE…KPRA and NKDK…DPQR. A compositionally biased stretch (low complexity) spans 180 to 197; the sequence is LASLSPLRKASLSSSSSL.

The protein belongs to the FAM90 family.

In Homo sapiens (Human), this protein is Protein FAM90A12.